The sequence spans 326 residues: Acyl-CoA-binding domain-containing protein 4 (326 aa).

The region spanning 10–99 (CQKQFQAAVS…MKLVAQKVID (90 aa)) is the ACB domain. Residues 21-30 (IQNLPKNGSY), 41-45 (YSYYK), K67, and Y86 each bind an acyl-CoA. Disordered regions lie at residues 147 to 170 (VQAA…SRLP) and 223 to 248 (KEAA…SLMG). The residue at position 164 (S164) is a Phosphoserine.

In terms of biological role, binds medium- and long-chain acyl-CoA esters and may function as an intracellular carrier of acyl-CoA esters. The sequence is that of Acyl-CoA-binding domain-containing protein 4 (Acbd4) from Rattus norvegicus (Rat).